The primary structure comprises 208 residues: Cytidylate kinase (208 aa).

9-17 (GPSASGKSS) is a binding site for ATP.

Belongs to the cytidylate kinase family. Type 1 subfamily.

It localises to the cytoplasm. It carries out the reaction CMP + ATP = CDP + ADP. The enzyme catalyses dCMP + ATP = dCDP + ADP. The polypeptide is Cytidylate kinase (Thermus thermophilus (strain ATCC BAA-163 / DSM 7039 / HB27)).